Consider the following 207-residue polypeptide: Holliday junction branch migration complex subunit RuvA (207 aa).

The tract at residues methionine 1–serine 65 is domain I. The domain II stretch occupies residues serine 66–isoleucine 144. A flexible linker region spans residues alanine 145–methionine 155. The domain III stretch occupies residues methionine 155–serine 207.

It belongs to the RuvA family. Homotetramer. Forms an RuvA(8)-RuvB(12)-Holliday junction (HJ) complex. HJ DNA is sandwiched between 2 RuvA tetramers; dsDNA enters through RuvA and exits via RuvB. An RuvB hexamer assembles on each DNA strand where it exits the tetramer. Each RuvB hexamer is contacted by two RuvA subunits (via domain III) on 2 adjacent RuvB subunits; this complex drives branch migration. In the full resolvosome a probable DNA-RuvA(4)-RuvB(12)-RuvC(2) complex forms which resolves the HJ.

The protein resides in the cytoplasm. Its function is as follows. The RuvA-RuvB-RuvC complex processes Holliday junction (HJ) DNA during genetic recombination and DNA repair, while the RuvA-RuvB complex plays an important role in the rescue of blocked DNA replication forks via replication fork reversal (RFR). RuvA specifically binds to HJ cruciform DNA, conferring on it an open structure. The RuvB hexamer acts as an ATP-dependent pump, pulling dsDNA into and through the RuvAB complex. HJ branch migration allows RuvC to scan DNA until it finds its consensus sequence, where it cleaves and resolves the cruciform DNA. The chain is Holliday junction branch migration complex subunit RuvA from Chlamydia caviae (strain ATCC VR-813 / DSM 19441 / 03DC25 / GPIC) (Chlamydophila caviae).